Consider the following 425-residue polypeptide: Serine--tRNA ligase (425 aa).

L-serine is bound at residue 231–233; the sequence is TAE. Residue 262–264 coordinates ATP; the sequence is RSE. Glu-285 contacts L-serine. 349 to 352 provides a ligand contact to ATP; sequence EISS. Ser-385 contacts L-serine.

Belongs to the class-II aminoacyl-tRNA synthetase family. Type-1 seryl-tRNA synthetase subfamily. In terms of assembly, homodimer. The tRNA molecule binds across the dimer.

The protein resides in the cytoplasm. The catalysed reaction is tRNA(Ser) + L-serine + ATP = L-seryl-tRNA(Ser) + AMP + diphosphate + H(+). It catalyses the reaction tRNA(Sec) + L-serine + ATP = L-seryl-tRNA(Sec) + AMP + diphosphate + H(+). It participates in aminoacyl-tRNA biosynthesis; selenocysteinyl-tRNA(Sec) biosynthesis; L-seryl-tRNA(Sec) from L-serine and tRNA(Sec): step 1/1. Catalyzes the attachment of serine to tRNA(Ser). Is also able to aminoacylate tRNA(Sec) with serine, to form the misacylated tRNA L-seryl-tRNA(Sec), which will be further converted into selenocysteinyl-tRNA(Sec). The polypeptide is Serine--tRNA ligase (Maricaulis maris (strain MCS10) (Caulobacter maris)).